The following is a 566-amino-acid chain: FAD-dependent monooxygenase asqG (566 aa).

A signal peptide spans 1-19; that stretch reads MAAFTVIIIGGSISGLTLA. Positions 33, 47, 113, 313, and 326 each coordinate FAD. 2 consecutive transmembrane segments (helical) span residues 448-468 and 482-502; these read ASST…GAVW and GYTL…ASAV.

Belongs to the paxM FAD-dependent monooxygenase family. Requires FAD as cofactor.

The protein resides in the membrane. The catalysed reaction is [(1'E)-3'-hydroxy-3',7'-dimethylocta-1',6'-dien-1'-yl]-quinolinone B + NADPH + O2 + H(+) = [(1'E)-5'-(3',3'-dimethyloxiran-2'-yl)-3'-hydroxy-3'-methylpent-1'-en-1'-yl]-quinolinone B + NADP(+) + H2O. It functions in the pathway secondary metabolite biosynthesis. It participates in alkaloid biosynthesis. The protein operates within mycotoxin biosynthesis. Its function is as follows. FAD-dependent monooxygenase; part of the gene cluster that mediates the biosynthesis of the aspoquinolone mycotoxins. Within the pathway, the FAD-dependent monooxygenase asqG catalyzes the epoxidation of the terminal C7'-C8' olefin to produce the intermediate [(1'E)-5'-(3',3'-dimethyloxiran-2'-yl)-3'-hydroxy-3'-methylpent-1'-en-1'-yl]-quinolinone B. The first step of the pathway is catalyzed by the nonribosomal peptide synthetase asqK that condenses anthranilic acid and O-methyl-L-tyrosine to produce 4'-methoxycyclopeptin. 4'-methoxycyclopeptin is then converted to 4'-methoxydehydrocyclopeptin by the ketoglutarate-dependent dioxygenase asqJ. AsqJ also converts its first product 4'-methoxydehydrocyclopeptin to 4'-methoxycyclopenin. The following conversion of 4'-methoxycyclopenin into 4'-methoxyviridicatin is catalyzed by the cyclopenase asqI. 4'-methoxyviridicatin is the precursor of quinolone natural products, and is further converted to quinolinone B. The prenyltransferase asqH1 then catalyzes the canonical Friedel-Crafts alkylation of quinolinone B with dimethylallyl cation to yield dimethylallyl quinolone, which is subjected to FAD-dependent dehydrogenation by the FAD-linked oxidoreductase asqF to yield conjugated aryl diene. The delta(3') double bond then serves as the site of the second alkylation with DMAPP catalyzed by the prenyltransferase asqH2 to yield a carbenium ion intermediate, which can be attacked by H(2)O to yield a styrenyl quinolone containing a C3'-hydroxyprenyl chain. The FAD-dependent monooxygenase asqG performs epoxidation of the terminal C7'-C8' olefin. Finally, after dehydratation of the epoxide at C3 by asqC, the quinolone epoxide rearrangement protein asqO catalyzes an enzymatic 3-exo-tet cyclization to yield the cyclopropyl-THF ring system in aspoquinolone. The protein is FAD-dependent monooxygenase asqG of Emericella nidulans (strain FGSC A4 / ATCC 38163 / CBS 112.46 / NRRL 194 / M139) (Aspergillus nidulans).